A 1099-amino-acid chain; its full sequence is Contactin-5 (1099 aa).

A signal peptide spans 1 to 18 (MASSWRLILFLSFTSCLS). 6 Ig-like C2-type domains span residues 99-190 (PVFV…ATLQ), 196-282 (NFSG…RVLS), 300-385 (PKIE…GQLQ), 390-474 (PHWV…AELK), 480-569 (PSFE…VSVK), and 571-660 (PTRI…DSVS). Cysteine 123 and cysteine 173 are oxidised to a cystine. Residues asparagine 138 and asparagine 196 are each glycosylated (N-linked (GlcNAc...) asparagine). 2 disulfides stabilise this stretch: cysteine 217/cysteine 269 and cysteine 322/cysteine 369. Asparagine 397, asparagine 449, and asparagine 540 each carry an N-linked (GlcNAc...) asparagine glycan. Disulfide bonds link cysteine 411–cysteine 458, cysteine 503–cysteine 551, and cysteine 593–cysteine 650. Fibronectin type-III domains are found at residues 673 to 771 (PPGV…TNEA), 776 to 873 (APSN…SAEG), 878 to 972 (APTD…TKRH), and 977 to 1067 (PPGN…SYAG). N-linked (GlcNAc...) asparagine glycosylation is found at asparagine 779, asparagine 816, and asparagine 931. The segment at 958-983 (YGPPSREVSATTKRHPPSEPPGNLRW) is disordered. Residue asparagine 1002 is glycosylated (N-linked (GlcNAc...) asparagine). The GPI-anchor amidated serine moiety is linked to residue serine 1072. Positions 1073–1099 (AQSTLHSLSKWSSVTLLLALMLPSSSW) are cleaved as a propeptide — removed in mature form.

This sequence belongs to the immunoglobulin superfamily. Contactin family. Interacts with PTPRG. In terms of tissue distribution, specifically expressed in the nervous system. Expressed in cerebrum and cerebellum but at low level in spinal cord. In brain, it is expressed in highly restricted regions at postnatal day 7, such as the auditory pathway, including the cochlear nucleus, superior olive, inferior colliculus, medial geniculate nucleus and auditory cortex. Expressed in the accessory olfactory bulb, glomerular and mitral cell layers in the olfactory bulb, anterior thalamic nuclei, layers II-IV of the cerebral cortex, dentate gyrus of the hippocampus and external granule cells and Purkinje cells of the cerebellum. Also expressed in the piriform cortex, inferior olive and facial nucleus. Weakly or not expressed in other parts of the brain.

It is found in the cell membrane. Functionally, contactins mediate cell surface interactions during nervous system development. Has some neurite outgrowth-promoting activity in the cerebral cortical neurons but not in hippocampal neurons. Probably involved in neuronal activity in the auditory system. This Rattus norvegicus (Rat) protein is Contactin-5 (Cntn5).